The primary structure comprises 338 residues: N-acetyl-gamma-glutamyl-phosphate reductase (338 aa).

The active site involves cysteine 148.

It belongs to the NAGSA dehydrogenase family. Type 1 subfamily.

Its subcellular location is the cytoplasm. It catalyses the reaction N-acetyl-L-glutamate 5-semialdehyde + phosphate + NADP(+) = N-acetyl-L-glutamyl 5-phosphate + NADPH + H(+). The protein operates within amino-acid biosynthesis; L-arginine biosynthesis; N(2)-acetyl-L-ornithine from L-glutamate: step 3/4. Catalyzes the NADPH-dependent reduction of N-acetyl-5-glutamyl phosphate to yield N-acetyl-L-glutamate 5-semialdehyde. This chain is N-acetyl-gamma-glutamyl-phosphate reductase, found in Leptospira borgpetersenii serovar Hardjo-bovis (strain JB197).